Here is a 202-residue protein sequence, read N- to C-terminus: Nascent polypeptide-associated complex subunit alpha (202 aa).

Residues 1–19 (MADPRVEELPDEEVPKTNV) are compositionally biased toward basic and acidic residues. The disordered stretch occupies residues 1–44 (MADPRVEELPDEEVPKTNVEDAGSDSESEAGEEPTIPGGAAVAV). Over residues 22–32 (AGSDSESEAGE) the composition is skewed to acidic residues. The NAC-A/B domain occupies 46–111 (SRNEKKARKA…AKIEDLNAQA (66 aa)). The interval 118–165 (QLAAQEAAQEHAGHEHEDILGKAKEPEAEKKEAEEDDGEEVDESGLEA) is disordered. Basic and acidic residues predominate over residues 125-150 (AQEHAGHEHEDILGKAKEPEAEKKEA). A compositionally biased stretch (acidic residues) spans 151–162 (EEDDGEEVDESG). The UBA domain occupies 163 to 202 (LEAKDIELVMAQANVSRKKAVKALRENDNDIVNSIMALSI).

This sequence belongs to the NAC-alpha family. In terms of assembly, part of the nascent polypeptide-associated complex (NAC), consisting of egd2 and egd1. NAC associates with ribosomes via egd1.

It is found in the cytoplasm. The protein resides in the nucleus. Component of the nascent polypeptide-associated complex (NAC), a dynamic component of the ribosomal exit tunnel, protecting the emerging polypeptides from interaction with other cytoplasmic proteins to ensure appropriate nascent protein targeting. The NAC complex also promotes mitochondrial protein import by enhancing productive ribosome interactions with the outer mitochondrial membrane and blocks the inappropriate interaction of ribosomes translating non-secretory nascent polypeptides with translocation sites in the membrane of the endoplasmic reticulum. Egd2 may also be involved in transcription regulation. This is Nascent polypeptide-associated complex subunit alpha (egd2) from Aspergillus terreus (strain NIH 2624 / FGSC A1156).